The sequence spans 506 residues: 2-isopropylmalate synthase (506 aa).

The 265-residue stretch at 8-272 (LIVFDTTLRD…ETGIQLKEIL (265 aa)) folds into the Pyruvate carboxyltransferase domain. 4 residues coordinate Mn(2+): Asp-17, His-206, His-208, and Asn-242. The regulatory domain stretch occupies residues 396-506 (ELEYVAVTVC…YLNAVNKALL (111 aa)).

It belongs to the alpha-IPM synthase/homocitrate synthase family. LeuA type 1 subfamily. Homodimer. It depends on Mn(2+) as a cofactor.

It is found in the cytoplasm. It catalyses the reaction 3-methyl-2-oxobutanoate + acetyl-CoA + H2O = (2S)-2-isopropylmalate + CoA + H(+). It functions in the pathway amino-acid biosynthesis; L-leucine biosynthesis; L-leucine from 3-methyl-2-oxobutanoate: step 1/4. In terms of biological role, catalyzes the condensation of the acetyl group of acetyl-CoA with 3-methyl-2-oxobutanoate (2-ketoisovalerate) to form 3-carboxy-3-hydroxy-4-methylpentanoate (2-isopropylmalate). The protein is 2-isopropylmalate synthase of Methylacidiphilum infernorum (isolate V4) (Methylokorus infernorum (strain V4)).